The chain runs to 97 residues: CLAVATA3/ESR (CLE)-related protein ESR2-C (97 aa).

The segment at 1 to 97 (TRTDDKPGVN…IGPPPFLDRY (97 aa)) is disordered. Residues P47 and P50 each carry the hydroxyproline modification. Residue P50 is glycosylated (O-linked (Ara...) hydroxyproline).

It belongs to the CLV3/ESR signal peptide family. The O-glycosylation (arabinosylation) of the hydroxyproline Pro-50 enhances binding affinity of the ESR2Cp peptide for its receptor. As to expression, seed endosperm.

Its subcellular location is the secreted. It is found in the extracellular space. In terms of biological role, extracellular signal peptide that regulates cell fate. The polypeptide is CLAVATA3/ESR (CLE)-related protein ESR2-C (Zea mays (Maize)).